A 385-amino-acid chain; its full sequence is Sulfoquinovose monooxygenase (385 aa).

The interval 366–385 (AYGRVPSETPATPLGNGERH) is disordered.

This sequence belongs to the SsuD family. Homodimer.

It carries out the reaction 6-sulfo-D-quinovose + FMNH2 + O2 = 6-dehydro-D-glucose + FMN + sulfite + H2O + 2 H(+). Its function is as follows. Part of the sulfoquinovose monooxygenase (sulfo-SMO) pathway, a D-sulfoquinovose degradation pathway that enables the complete utilization of all carbons within sulfoquinovose (SQ) with concomitant production of inorganic sulfite. Catalyzes the oxidative desulfurization of sulfoquinovose to sulfite and 6-dehydro-D-glucose. Is highly specific for sulfoquinovose and cannot use sulfoquinovosyl glycerol. FMNH(2) is provided by the FMN reductase SmoA. This is Sulfoquinovose monooxygenase from Agrobacterium fabrum (strain C58 / ATCC 33970) (Agrobacterium tumefaciens (strain C58)).